The primary structure comprises 467 residues: 3-isopropylmalate dehydratase large subunit (467 aa).

C347, C408, and C411 together coordinate [4Fe-4S] cluster.

It belongs to the aconitase/IPM isomerase family. LeuC type 1 subfamily. As to quaternary structure, heterodimer of LeuC and LeuD. [4Fe-4S] cluster is required as a cofactor.

The enzyme catalyses (2R,3S)-3-isopropylmalate = (2S)-2-isopropylmalate. Its pathway is amino-acid biosynthesis; L-leucine biosynthesis; L-leucine from 3-methyl-2-oxobutanoate: step 2/4. Functionally, catalyzes the isomerization between 2-isopropylmalate and 3-isopropylmalate, via the formation of 2-isopropylmaleate. The polypeptide is 3-isopropylmalate dehydratase large subunit (Bordetella bronchiseptica (strain ATCC BAA-588 / NCTC 13252 / RB50) (Alcaligenes bronchisepticus)).